The following is a 183-amino-acid chain: Archaemetzincin (183 aa).

Zn(2+) is bound at residue His-131. Glu-132 (proton acceptor) is an active-site residue. Residues His-135, His-141, Cys-142, Cys-147, Cys-166, and Cys-169 each coordinate Zn(2+).

Belongs to the peptidase M54 family. Monomer. Zn(2+) serves as cofactor.

Functionally, probable zinc metalloprotease whose natural substrate is unknown. The chain is Archaemetzincin from Saccharolobus islandicus (strain Y.N.15.51 / Yellowstone #2) (Sulfolobus islandicus).